Consider the following 220-residue polypeptide: LHFPL tetraspan subfamily member 1 protein (220 aa).

Positions 1–20 (MRNSLTMVGTFWAFLSLVTA) are cleaved as a signal peptide. Transmembrane regions (helical) follow at residues 86-106 (VVTG…VLGC) and 122-142 (AAQF…PLGW). Residue asparagine 153 is glycosylated (N-linked (GlcNAc...) asparagine). The helical transmembrane segment at 165–185 (LGWAYYCAGGGAAAAMLICTW) threads the bilayer.

It belongs to the LHFP family. As to expression, widely expressed. Strongly expressed in vagina and ovary. Weakly expressed in spleen, kidney, thymus, testis, brain, lung, intestine and uterus.

The protein resides in the membrane. The chain is LHFPL tetraspan subfamily member 1 protein from Mus musculus (Mouse).